The primary structure comprises 315 residues: tRNA dimethylallyltransferase (315 aa).

An ATP-binding site is contributed by 15–22; that stretch reads GPTACGKS. 17–22 is a substrate binding site; it reads TACGKS. Interaction with substrate tRNA stretches follow at residues 40 to 43 and 162 to 166; these read DSAL and QRLIR.

The protein belongs to the IPP transferase family. Monomer. The cofactor is Mg(2+).

The enzyme catalyses adenosine(37) in tRNA + dimethylallyl diphosphate = N(6)-dimethylallyladenosine(37) in tRNA + diphosphate. Its function is as follows. Catalyzes the transfer of a dimethylallyl group onto the adenine at position 37 in tRNAs that read codons beginning with uridine, leading to the formation of N6-(dimethylallyl)adenosine (i(6)A). The chain is tRNA dimethylallyltransferase from Buchnera aphidicola subsp. Acyrthosiphon pisum (strain APS) (Acyrthosiphon pisum symbiotic bacterium).